The sequence spans 208 residues: Pyridoxine/pyridoxamine 5'-phosphate oxidase (208 aa).

FMN is bound by residues 55 to 60 (RMVLLK), 70 to 71 (YT), K76, K77, and Q99. Residue K60 coordinates substrate. Positions 117, 121, and 125 each coordinate substrate. FMN contacts are provided by residues 134–135 (QS) and W179. Residue 185–187 (RLH) participates in substrate binding. R189 is an FMN binding site.

Belongs to the pyridoxamine 5'-phosphate oxidase family. Homodimer. It depends on FMN as a cofactor.

The catalysed reaction is pyridoxamine 5'-phosphate + O2 + H2O = pyridoxal 5'-phosphate + H2O2 + NH4(+). The enzyme catalyses pyridoxine 5'-phosphate + O2 = pyridoxal 5'-phosphate + H2O2. The protein operates within cofactor metabolism; pyridoxal 5'-phosphate salvage; pyridoxal 5'-phosphate from pyridoxamine 5'-phosphate: step 1/1. It functions in the pathway cofactor metabolism; pyridoxal 5'-phosphate salvage; pyridoxal 5'-phosphate from pyridoxine 5'-phosphate: step 1/1. Catalyzes the oxidation of either pyridoxine 5'-phosphate (PNP) or pyridoxamine 5'-phosphate (PMP) into pyridoxal 5'-phosphate (PLP). This Brucella abortus biovar 1 (strain 9-941) protein is Pyridoxine/pyridoxamine 5'-phosphate oxidase.